The following is a 40-amino-acid chain: Photosystem II reaction center protein J (40 aa).

A helical membrane pass occupies residues 8-28 (IPLWLISTVTGTLVIGLMGIF).

Belongs to the PsbJ family. PSII is composed of 1 copy each of membrane proteins PsbA, PsbB, PsbC, PsbD, PsbE, PsbF, PsbH, PsbI, PsbJ, PsbK, PsbL, PsbM, PsbT, PsbX, PsbY, PsbZ, Psb30/Ycf12, at least 3 peripheral proteins of the oxygen-evolving complex and a large number of cofactors. It forms dimeric complexes.

The protein resides in the plastid. The protein localises to the chloroplast thylakoid membrane. Its function is as follows. One of the components of the core complex of photosystem II (PSII). PSII is a light-driven water:plastoquinone oxidoreductase that uses light energy to abstract electrons from H(2)O, generating O(2) and a proton gradient subsequently used for ATP formation. It consists of a core antenna complex that captures photons, and an electron transfer chain that converts photonic excitation into a charge separation. The polypeptide is Photosystem II reaction center protein J (Ginkgo biloba (Ginkgo)).